The following is a 550-amino-acid chain: Pectinesterase 2.1 (550 aa).

Asn179 carries N-linked (GlcNAc...) asparagine glycosylation. Thr312 and Gln342 together coordinate substrate. A disulfide bridge connects residues Cys331 and Cys358. Asp365 functions as the Proton donor in the catalytic mechanism. Residue Asp386 is the Nucleophile of the active site. A disulfide bond links Cys399 and Cys433. Positions 454 and 456 each coordinate substrate.

This sequence in the N-terminal section; belongs to the PMEI family. The protein in the C-terminal section; belongs to the pectinesterase family.

The protein resides in the secreted. The protein localises to the cell wall. The enzyme catalyses [(1-&gt;4)-alpha-D-galacturonosyl methyl ester](n) + n H2O = [(1-&gt;4)-alpha-D-galacturonosyl](n) + n methanol + n H(+). The protein operates within glycan metabolism; pectin degradation; 2-dehydro-3-deoxy-D-gluconate from pectin: step 1/5. Its function is as follows. Pectinesterase may play a role in cell wall metabolism during fruit growth and development prior to ripening and may be required for preparing cell walls for softening by polygalacturonase during fruit ripening. This Solanum lycopersicum (Tomato) protein is Pectinesterase 2.1 (PME2.1).